We begin with the raw amino-acid sequence, 546 residues long: Alpha-isocomene synthase (546 aa).

The Mg(2+) site is built by Asp-299, Asp-303, Asp-443, and Glu-451. The short motif at 299–303 (DDTYD) is the DDXXD motif element.

It belongs to the terpene synthase family. Tpsa subfamily. Requires Mg(2+) as cofactor. Mn(2+) is required as a cofactor. As to expression, highly expressed in roots, lower levels in stems and leaves and detected in disk florets, but not in ray florets.

The enzyme catalyses (2E,6E)-farnesyl diphosphate = (-)-alpha-isocomene + diphosphate. Its pathway is secondary metabolite biosynthesis; terpenoid biosynthesis. Sesquiterpene synthase involved in the biosynthesis of alpha-isocomene as the major product and detectable amounts of beta-caryophyllene, beta-isocomene, silphinene and modeph-2-ene. Produces exclusively the (-)-(E)-beta caryophyllene enantiomer. The protein is Alpha-isocomene synthase of Matricaria chamomilla var. recutita (German chamomile).